A 329-amino-acid polypeptide reads, in one-letter code: MADKGSVAAKSLTNSAPLSIFSYCAASILMTVTNKYAVSGVDFNFNFFLLAVQGIVCITLISSLKQLNVITFREFNKVEAKKWFPIAVLLVVMIYTSSKALQYLSIPIYTIFKNLTIILIAYGEVIWFGGRVTNLALGSFVLMVLSSAVASYGDSNVDTGKLNFNIGYFWMFTNCFSSAAFVLFMRKRIKLTNFKDFDTMYYNNLLSIPILLFASLTTEDWSAKNIAQNFPEDTKYAVIASMIISGMSAVGISYTSAWCVRVTSSTTYSMVGALNKLPIALSGLLFFKAPINFYSISSIFIGFAAGLVYAIAKQKQKKEDELQLPTDKS.

Topologically, residues M1 to S11 are cytoplasmic. The chain crosses the membrane as a helical span at residues L12 to V32. Topologically, residues T33–G40 are lumenal. The helical transmembrane segment at V41–I61 threads the bilayer. The Cytoplasmic portion of the chain corresponds to S62 to W83. A helical transmembrane segment spans residues F84–L104. Over S105–P107 the chain is Lumenal. The helical transmembrane segment at I108 to F128 threads the bilayer. At G129–R131 the chain is on the cytoplasmic side. Residues V132–Y152 traverse the membrane as a helical segment. At G153–N163 the chain is on the lumenal side. A helical transmembrane segment spans residues F164–F184. Topologically, residues M185–D196 are cytoplasmic. The helical transmembrane segment at F197–T217 threads the bilayer. The Lumenal segment spans residues T218–A237. A helical membrane pass occupies residues V238–W258. The Cytoplasmic segment spans residues C259–T266. Residues T267–F287 form a helical membrane-spanning segment. The Lumenal portion of the chain corresponds to K288–P290. Residues I291 to I311 form a helical membrane-spanning segment. The Cytoplasmic segment spans residues A312–S329.

Belongs to the TPT transporter family. SLC35D subfamily. In terms of assembly, homooligomer.

It is found in the golgi apparatus membrane. The protein resides in the cytoplasmic vesicle membrane. Its subcellular location is the endoplasmic reticulum membrane. Involved in the import of GDP-mannose from the cytoplasm into the Golgi lumen. In Komagataella pastoris (Yeast), this protein is GDP-mannose transporter (VIG4).